The primary structure comprises 40 residues: Alpha-conotoxin-like Qc1.1c (40 aa).

The propeptide occupies 1-19 (SDGRNTAANDKASNLMALR). Cystine bridges form between cysteine 22-cysteine 28 and cysteine 23-cysteine 36. Residues 24–26 (PNP) are lacks the Ser-Xaa-Pro motif that is crucial for potent interaction with nAChR.

Belongs to the conotoxin A superfamily. Expressed by the venom duct.

The protein localises to the secreted. In terms of biological role, alpha-conotoxins act on postsynaptic membranes, they bind to the nicotinic acetylcholine receptors (nAChR) and thus inhibit them. Has possibly a distinct nAChR binding mode from other alpha-conotoxins, due to a different three residue motif (lacks the Ser-Xaa-Pro motif). The sequence is that of Alpha-conotoxin-like Qc1.1c from Conus quercinus (Oak cone).